The following is a 446-amino-acid chain: Saccharopine dehydrogenase [NADP(+), L-glutamate-forming] (446 aa).

Residues 10–13 (SGFV), 33–35 (CRT), 54–55 (DV), I75, 97–98 (SS), 124–126 (LDP), and S174 each bind NADP(+). L-saccharopine contacts are provided by residues 98-99 (SY) and D125. Residues R223 and 244-246 (TLR) each bind L-saccharopine.

Belongs to the saccharopine dehydrogenase family. Interacts with TRM112.

It catalyses the reaction L-saccharopine + NADP(+) + H2O = (S)-2-amino-6-oxohexanoate + L-glutamate + NADPH + H(+). The protein operates within amino-acid biosynthesis; L-lysine biosynthesis via AAA pathway; L-lysine from L-alpha-aminoadipate (fungal route): step 2/3. The chain is Saccharopine dehydrogenase [NADP(+), L-glutamate-forming] (LYS9) from Saccharomyces cerevisiae (strain ATCC 204508 / S288c) (Baker's yeast).